The chain runs to 220 residues: N-(5'-phosphoribosyl)anthranilate isomerase (220 aa).

The protein belongs to the TrpF family.

It catalyses the reaction N-(5-phospho-beta-D-ribosyl)anthranilate = 1-(2-carboxyphenylamino)-1-deoxy-D-ribulose 5-phosphate. It functions in the pathway amino-acid biosynthesis; L-tryptophan biosynthesis; L-tryptophan from chorismate: step 3/5. The polypeptide is N-(5'-phosphoribosyl)anthranilate isomerase (Xylella fastidiosa (strain M12)).